Reading from the N-terminus, the 295-residue chain is Probable adenylate kinase 6, chloroplastic (295 aa).

The transit peptide at M1–A46 directs the protein to the chloroplast. G74–T79 provides a ligand contact to ATP. The interval A94–V123 is NMP. AMP contacts are provided by residues T95, R100, K121–V123, G151–R154, and Q158. An LID region spans residues G187–D235. R188 contributes to the ATP binding site. R243 serves as a coordination point for AMP. Residue G271 participates in ATP binding.

Belongs to the adenylate kinase family. In terms of assembly, monomer.

The protein resides in the plastid. It is found in the chloroplast. It catalyses the reaction AMP + ATP = 2 ADP. In terms of biological role, catalyzes the reversible transfer of the terminal phosphate group between ATP and AMP. Plays an important role in cellular energy homeostasis and in adenine nucleotide metabolism. In Arabidopsis thaliana (Mouse-ear cress), this protein is Probable adenylate kinase 6, chloroplastic.